The primary structure comprises 291 residues: MAKGRVADRSPTEMLHSTPAGDRAVRTQGSAAPGSKDHLNEKPCAEAGSARTSLLILVSIFSCAAFVMFLVYKNFPQLSEEERVNMKVPRDMDDAKALGKVLSKYKDTFYVQVLVAYFATYIFLQTFAIPGSIFLSILSGFLYPFPLALFLVCLCSGLGASFCYMLSYLVGRPVVYKYLTEKAVKWSQQVERHREHLINYIIFLRITPFLPNWFINITSPVINVPLKVFFIGTFLGVAPPSFVAIKAGTTLHQLTTAGEAVSWSSVFILMVLALLSILPAIFQKQLKQKFE.

The span at 1–11 (MAKGRVADRSP) shows a compositional bias: basic and acidic residues. Residues 1 to 43 (MAKGRVADRSPTEMLHSTPAGDRAVRTQGSAAPGSKDHLNEKP) are disordered. Residue Thr18 is modified to Phosphothreonine. A Phosphoserine modification is found at Ser35. The next 6 helical transmembrane spans lie at 52-72 (TSLL…FLVY), 109-129 (FYVQ…TFAI), 147-169 (LALF…LSYL), 197-217 (LINY…FINI), 225-245 (PLKV…FVAI), and 262-282 (SWSS…PAIF). Residues 140–251 (GFLYPFPLAL…FVAIKAGTTL (112 aa)) are VTT domain; required for its function in autophagy.

This sequence belongs to the TMEM41 family. As to quaternary structure, interacts with VMP1. Interacts with COPA, COPB1, VDAC1 and ERLIN2. Interacts with ATG2A. Interacts with SURF4. As to expression, expressed in brain, spinal cord, kidney and first lumbar dorsal root ganglia during postnatal development. Expressed in motor neurons and proprioceptive neurons.

Its subcellular location is the endoplasmic reticulum membrane. The protein resides in the endomembrane system. It catalyses the reaction a 1,2-diacyl-sn-glycero-3-phospho-L-serine(in) = a 1,2-diacyl-sn-glycero-3-phospho-L-serine(out). It carries out the reaction cholesterol(in) = cholesterol(out). The enzyme catalyses a 1,2-diacyl-sn-glycero-3-phosphocholine(in) = a 1,2-diacyl-sn-glycero-3-phosphocholine(out). The catalysed reaction is a 1,2-diacyl-sn-glycero-3-phosphoethanolamine(in) = a 1,2-diacyl-sn-glycero-3-phosphoethanolamine(out). Functionally, phospholipid scramblase involved in lipid homeostasis and membrane dynamics processes. Has phospholipid scramblase activity toward cholesterol and phosphatidylserine, as well as phosphatidylethanolamine and phosphatidylcholine. Required for autophagosome formation: participates in early stages of autophagosome biogenesis at the endoplasmic reticulum (ER) membrane by reequilibrating the leaflets of the ER as lipids are extracted by ATG2 (ATG2A or ATG2B) to mediate autophagosome assembly. In addition to autophagy, involved in other processes in which phospholipid scramblase activity is required. Required for normal motor neuron development. The protein is Transmembrane protein 41B of Mus musculus (Mouse).